Reading from the N-terminus, the 267-residue chain is Lectin SfL-1 (267 aa).

4 consecutive repeat copies span residues 1–67 (GRYT…RRGD), 68–135 (SNNY…QSGG), 136–202 (DSYN…STGG), and 203–267 (SNYK…GTAI). The 4 X approximate tandem repeats stretch occupies residues 1 to 267 (GRYTVQNQWG…GPIGFKGTAI (267 aa)).

Monomer.

Functionally, lectin specific for high mannose N-glycans, recognizes the branched moiety of these glycans. Does not recognize other types of N-glycans or monosaccharides. The protein is Lectin SfL-1 of Solieria filiformis (Red alga).